Here is a 303-residue protein sequence, read N- to C-terminus: Probable 5-dehydro-4-deoxyglucarate dehydratase (303 aa).

It belongs to the DapA family.

The enzyme catalyses 5-dehydro-4-deoxy-D-glucarate + H(+) = 2,5-dioxopentanoate + CO2 + H2O. It participates in carbohydrate acid metabolism; D-glucarate degradation; 2,5-dioxopentanoate from D-glucarate: step 2/2. This chain is Probable 5-dehydro-4-deoxyglucarate dehydratase, found in Acinetobacter baumannii (strain SDF).